The following is a 154-amino-acid chain: Large ribosomal subunit protein uL13 (154 aa).

This sequence belongs to the universal ribosomal protein uL13 family. Part of the 50S ribosomal subunit.

This protein is one of the early assembly proteins of the 50S ribosomal subunit, although it is not seen to bind rRNA by itself. It is important during the early stages of 50S assembly. This is Large ribosomal subunit protein uL13 from Bradyrhizobium sp. (strain BTAi1 / ATCC BAA-1182).